A 131-amino-acid polypeptide reads, in one-letter code: C-glycoside deglycosidase beta subunit (131 aa).

The protein belongs to the C-glycoside deglycosidase beta subunit family. As to quaternary structure, heterodimer composed of an alpha subunit (CarB1) and a beta subunit (CarC1). Mg(2+) serves as cofactor.

The enzyme catalyses 3''-dehydroisovitexin = 1,5-anhydro-D-erythro-hex-1-en-3-ulose + apigenin. Activity is strongly reduced in the presence of chelating agents. Functionally, carbon-carbon bond-cleaving enzyme which participates in the metabolism of C-glycosides. Acts on the C6-glycosylated compound 3''-dehydroisovitexin (3''-oxo-isovitexin). Shows weak activity with 3''-dehydroisoorientin (3''-oxo-homoorientin) and 3'-dehydromangiferin (3'-oxo-mangiferin). The protein is C-glycoside deglycosidase beta subunit of Arthrobacter globiformis (strain ATCC 8010 / DSM 20124 / JCM 1332 / NBRC 12137 / NCIMB 8907 / NRRL B-2979 / 168).